Reading from the N-terminus, the 271-residue chain is Interleukin-1 alpha (271 aa).

A propeptide spanning residues 1-112 is cleaved from the precursor; that stretch reads MAKVPDMFED…DSEEEIIKPR (112 aa). At lysine 82 the chain carries N6-acetyllysine. Positions 82-86 are nuclear localization signal (NLS); it reads KKRRL. Position 87 is a phosphoserine (serine 87). N-linked (GlcNAc...) asparagine glycosylation is found at asparagine 102, asparagine 121, asparagine 137, asparagine 141, and asparagine 211.

Belongs to the IL-1 family. Monomer. Interacts with TMED10; the interaction mediates the translocation from the cytoplasm into the ERGIC (endoplasmic reticulum-Golgi intermediate compartment) and thereby secretion. Interacts with IL1R1. Interacts with S100A13; this interaction is the first step in the export of IL1A, followed by direct translocation of this complex across the plasma membrane. In terms of processing, acetylated within its nuclear localization sequence, which impacts subcellular localization. Post-translationally, proteolytic processed by CAPN1 in a calcium-dependent manner. Cleavage from 31 kDa precursor to 18 kDa biologically active molecules. Phosphorylated. Phosphorylation greatly enhances susceptibility to digestion and promotes the conversion of pre-IL1A alpha to the biologically active IL1A.

It is found in the nucleus. Its subcellular location is the cytoplasm. The protein resides in the secreted. Cytokine constitutively present intracellularly in nearly all resting non-hematopoietic cells that plays an important role in inflammation and bridges the innate and adaptive immune systems. After binding to its receptor IL1R1 together with its accessory protein IL1RAP, forms the high affinity interleukin-1 receptor complex. Signaling involves the recruitment of adapter molecules such as MYD88, IRAK1 or IRAK4. In turn, mediates the activation of NF-kappa-B and the three MAPK pathways p38, p42/p44 and JNK pathways. Within the cell, acts as an alarmin and cell death results in its liberation in the extracellular space after disruption of the cell membrane to induce inflammation and alert the host to injury or damage. In addition to its role as a danger signal, which occurs when the cytokine is passively released by cell necrosis, directly senses DNA damage and acts as signal for genotoxic stress without loss of cell integrity. This Macaca mulatta (Rhesus macaque) protein is Interleukin-1 alpha (IL1A).